The chain runs to 89 residues: Small ribosomal subunit protein bS20 (89 aa).

This sequence belongs to the bacterial ribosomal protein bS20 family.

Functionally, binds directly to 16S ribosomal RNA. The chain is Small ribosomal subunit protein bS20 from Helicobacter pylori (strain Shi470).